Here is a 575-residue protein sequence, read N- to C-terminus: MTEIEFGQPLPSNLDYAVSFGIPTWDSAIGYAEKVPEVIGKMATGYPRYFPQPPVQRLCAYFVKKFGRGSENCRPFPSVNLGLKCFEYVKSVSGPESKAHLEVETVTIKNRGAKTSKEPAELVLTIAAVLASEEEFETVKEYWKLRGECVSSRLALSVNQLLDCANHGSEQVLRELEAGVFAAKKGEEKAKNLIKGRIVENRFRPFGLEKKTPNWEGLNLNPNEDVYLVSSGMSAISTARNLLTFWEEKKNSGDSLNKTTSDQKKKPLLCDTVGIFGFPFKDTQVIMTKFGKCKFFGFGNSRDVVELQKFLETSKQRILAVFVETPSNPLLNMPDLKKLRSLADQYGFFIVIDDTIGGLNVDILPYADIVSTSLTKLFNGASNVMGGSVVLNPKSSLYPYAREYFRSANFEDLLWCEDAIVLERNSRDFEDRTLRANANTGILLNDLLLPEEGKICKKIYYPTVTSKETFENYESVRNERGGYGCLFSVAFFNEGDAKAFYDSLKVFKGPSNGTNFTLACPYVHLAHHSELEEVSKFGADPNIIRVSVGLEDIQWLLKVFSSALDVVKSRGSKHS.

Lys376 is subject to N6-(pyridoxal phosphate)lysine.

Belongs to the trans-sulfuration enzymes family. MET7 subfamily. It depends on pyridoxal 5'-phosphate as a cofactor.

It is found in the cytoplasm. The catalysed reaction is O-acetyl-L-homoserine + methanethiol = L-methionine + acetate + H(+). The enzyme catalyses O-acetyl-L-homoserine + hydrogen sulfide = L-homocysteine + acetate. It catalyses the reaction O-acetyl-L-serine + hydrogen sulfide = L-cysteine + acetate. Its pathway is amino-acid biosynthesis; L-methionine biosynthesis via de novo pathway; L-homocysteine from O-acetyl-L-homoserine. Its function is as follows. Plays a role in inorganic sulfur assimilation during sulfur-limited conditions; catalyzes the conversion of O-acetyl-L-homoserine (OAH) into homocysteine in the methionine biosynthesis pathway. Also catalyzes the conversion of O-acetylserine (OAS) into cysteine, the last step in the cysteine biosynthesis pathway. However, it seems that in S.cerevisiae cysteine biosynthesis occurs exclusively through the cystathionine pathway and not via direct incorporation of sulfur into OAS. It therefore has no metabolic role in cysteine biosynthesis and may only have a regulatory role controlling OAS levels. The polypeptide is Homocysteine/cysteine synthase (Saccharomyces cerevisiae (strain ATCC 204508 / S288c) (Baker's yeast)).